The chain runs to 762 residues: Endothelin-converting enzyme 1 (762 aa).

The Cytoplasmic portion of the chain corresponds to 1 to 60; that stretch reads MGSLRPPQGLGLQWSSFFLGKKGPGLTVSLPLLASSLQVNFRSPRSGQRCWAARTSVEKR. A helical; Signal-anchor for type II membrane protein membrane pass occupies residues 61-81; that stretch reads LVVLVTLLAAGLVACLAALGI. Residues 82–762 are Extracellular-facing; that stretch reads QYRTRTPPVC…MNPRHKCEVW (681 aa). The Peptidase M13 domain occupies 90–762; it reads VCLTEACVSV…MNPRHKCEVW (673 aa). Cystine bridges form between cysteine 91–cysteine 96, cysteine 114–cysteine 747, cysteine 122–cysteine 707, cysteine 177–cysteine 427, and cysteine 636–cysteine 759. Asparagine 158, asparagine 179, asparagine 202, asparagine 262, asparagine 308, asparagine 354, asparagine 375, and asparagine 531 each carry an N-linked (GlcNAc...) asparagine glycan. Histidine 599 serves as a coordination point for Zn(2+). Residue glutamate 600 is part of the active site. Zn(2+) is bound at residue histidine 603. Asparagine 624 and asparagine 643 each carry an N-linked (GlcNAc...) asparagine glycan. Glutamate 659 serves as a coordination point for Zn(2+). The Proton donor role is filled by aspartate 663.

This sequence belongs to the peptidase M13 family. As to quaternary structure, homodimer; disulfide-linked. Interacts with PPP1R16B. Interacts with TSPAN8; this interaction recruits the endothelin converting enzyme ECE1 to tetraspanin-enriched microdomains and positively modulates its enzymatic activity. Zn(2+) serves as cofactor. In terms of tissue distribution, all isoforms are expressed in aortic endothelial cells. Isoform A is also expressed in liver; isoform B in smooth muscle cells and fibroblasts; isoform C in aortic endothelial cells, smooth muscle cells, fibroblasts, liver and lung, and isoform D in smooth muscle cells.

It localises to the cell membrane. It catalyses the reaction Hydrolysis of the 21-Trp-|-Val-22 bond in big endothelin to form endothelin 1.. Its activity is regulated as follows. Inhibited by phosphoramidon. Converts big endothelin-1 to endothelin-1. The chain is Endothelin-converting enzyme 1 (Ece1) from Rattus norvegicus (Rat).